Reading from the N-terminus, the 642-residue chain is 2-oxoacid:ferredoxin oxidoreductase 2, subunit alpha (642 aa).

The short motif at Tyr263–Pro267 is the YPITP motif element. 2 residues coordinate substrate: Thr266 and Arg356.

As to quaternary structure, heterodimer composed of an alpha and a beta subunit.

The enzyme catalyses a 2-oxocarboxylate + 2 oxidized [2Fe-2S]-[ferredoxin] + CoA = an acyl-CoA + 2 reduced [2Fe-2S]-[ferredoxin] + CO2 + H(+). Functionally, catalyzes the coenzyme A-dependent oxidative decarboxylation of different 2-oxoacids such as pyruvate, 2-oxobutyrate, glyoxylate and 2-oxoglutarate to form their CoA derivatives. The protein is 2-oxoacid:ferredoxin oxidoreductase 2, subunit alpha of Aeropyrum pernix (strain ATCC 700893 / DSM 11879 / JCM 9820 / NBRC 100138 / K1).